An 83-amino-acid chain; its full sequence is Short neurotoxin 3FTx-Oxy4 (83 aa).

The N-terminal stretch at 1–21 is a signal peptide; that stretch reads MKTLLLTLVVVTIVCLDLGYT. Intrachain disulfides connect Cys24-Cys45, Cys38-Cys62, Cys64-Cys75, and Cys76-Cys81.

Belongs to the three-finger toxin family. Short-chain subfamily. Type I alpha-neurotoxin sub-subfamily. As to expression, expressed by the venom gland.

The protein resides in the secreted. In terms of biological role, binds to muscle nicotinic acetylcholine receptor (nAChR) and inhibit acetylcholine from binding to the receptor, thereby impairing neuromuscular transmission. This chain is Short neurotoxin 3FTx-Oxy4, found in Oxyuranus microlepidotus (Inland taipan).